Reading from the N-terminus, the 397-residue chain is Argininosuccinate synthase (397 aa).

8–16 (AYSGGLDTS) contacts ATP. L-citrulline contacts are provided by Tyr86 and Ser91. Gly116 is a binding site for ATP. Residues Thr118, Asn122, and Asp123 each contribute to the L-aspartate site. Position 122 (Asn122) interacts with L-citrulline. Residues Arg126, Ser175, Ser184, Glu260, and Tyr272 each contribute to the L-citrulline site.

It belongs to the argininosuccinate synthase family. Type 1 subfamily. In terms of assembly, homotetramer.

Its subcellular location is the cytoplasm. It catalyses the reaction L-citrulline + L-aspartate + ATP = 2-(N(omega)-L-arginino)succinate + AMP + diphosphate + H(+). It participates in amino-acid biosynthesis; L-arginine biosynthesis; L-arginine from L-ornithine and carbamoyl phosphate: step 2/3. This is Argininosuccinate synthase from Clostridium botulinum (strain Okra / Type B1).